We begin with the raw amino-acid sequence, 300 residues long: Ribosomal protein L11 methyltransferase (300 aa).

Residues threonine 152, glycine 173, aspartate 195, and asparagine 234 each contribute to the S-adenosyl-L-methionine site.

This sequence belongs to the methyltransferase superfamily. PrmA family.

It is found in the cytoplasm. The enzyme catalyses L-lysyl-[protein] + 3 S-adenosyl-L-methionine = N(6),N(6),N(6)-trimethyl-L-lysyl-[protein] + 3 S-adenosyl-L-homocysteine + 3 H(+). Its function is as follows. Methylates ribosomal protein L11. The polypeptide is Ribosomal protein L11 methyltransferase (Burkholderia mallei (strain NCTC 10247)).